Reading from the N-terminus, the 447-residue chain is Transcriptional enhancer factor TEF-4 (447 aa).

Disordered stretches follow at residues 1 to 46 (MGEP…GVWS) and 183 to 218 (TPFT…PPAW). The segment covering 11–20 (DDGSGWTGSE) has biased composition (low complexity). Residues 25-40 (EGTGGSEGAGGDGGPD) show a composition bias toward gly residues. The TEA DNA-binding region spans 38–114 (GPDAEGVWSP…QVLARRKSRE (77 aa)). The transcriptional activation stretch occupies residues 172–447 (WNVPDVKPFS…QHHIYRLVRD (276 aa)). Low complexity predominate over residues 183–206 (TPFTLSLTPPSTDLPGYEPPQALS). Residues 207–216 (PLPPPTPSPP) show a composition bias toward pro residues.

As to quaternary structure, interacts with YAP1 and WWTR1/TAZ.

Its subcellular location is the nucleus. Transcription factor which plays a key role in the Hippo signaling pathway, a pathway involved in organ size control and tumor suppression by restricting proliferation and promoting apoptosis. The core of this pathway is composed of a kinase cascade wherein MST1/MST2, in complex with its regulatory protein SAV1, phosphorylates and activates LATS1/2 in complex with its regulatory protein MOB1, which in turn phosphorylates and inactivates YAP1 oncoprotein and WWTR1/TAZ. Acts by mediating gene expression of YAP1 and WWTR1/TAZ, thereby regulating cell proliferation, migration and epithelial mesenchymal transition (EMT) induction. Binds to the SPH and GT-IIC 'enhansons' (5'-GTGGAATGT-3'). May be involved in the gene regulation of neural development. Binds to the M-CAT motif. The protein is Transcriptional enhancer factor TEF-4 (TEAD2) of Homo sapiens (Human).